The sequence spans 381 residues: Penicillin-binding protein 4 (381 aa).

The Acyl-ester intermediate role is filled by S60. A helical transmembrane segment spans residues 271–291 (VAGCLDTWSFMATGWGHGWAL). 299 to 308 (GYGHDGASGG) contributes to the NAD(+) binding site. Residues 315–340 (VVPGSGVVAALLTNGGVATSFFTDLF) form a helical membrane-spanning segment.

Belongs to the beta-lactamase family.

Its subcellular location is the cell membrane. Involved in cell wall biosynthesis and may also act as a sensor of external penicillins. This is Penicillin-binding protein 4 (pbp) from Amycolatopsis lactamdurans (Nocardia lactamdurans).